The primary structure comprises 654 residues: Coiled-coil domain-containing protein 81 (654 aa).

Residues 196–270 are disordered; the sequence is SRESYRKRPN…RERQSISPAK (75 aa). At Ser-206 the chain carries Phosphoserine. Composition is skewed to basic and acidic residues over residues 212–222 and 232–251; these read RIEHKETENKT and GENR…EGGA. 4 positions are modified to phosphoserine: Ser-273, Ser-275, Ser-296, and Ser-419. Positions 293–302 are enriched in polar residues; it reads ENLSSPGCQR. The disordered stretch occupies residues 293-318; sequence ENLSSPGCQRNDNERPRTSPAPACQD. Residues 431–562 adopt a coiled-coil conformation; sequence SQSLLKQMES…QRRDLQMLQR (132 aa).

Its subcellular location is the cytoplasm. It localises to the cytoskeleton. The protein localises to the microtubule organizing center. The protein resides in the centrosome. The protein is Coiled-coil domain-containing protein 81 (Ccdc81) of Mus musculus (Mouse).